A 144-amino-acid chain; its full sequence is Prefoldin subunit alpha (144 aa).

This sequence belongs to the prefoldin alpha subunit family. In terms of assembly, heterohexamer of two alpha and four beta subunits.

It localises to the cytoplasm. In terms of biological role, molecular chaperone capable of stabilizing a range of proteins. Seems to fulfill an ATP-independent, HSP70-like function in archaeal de novo protein folding. This chain is Prefoldin subunit alpha, found in Metallosphaera sedula (strain ATCC 51363 / DSM 5348 / JCM 9185 / NBRC 15509 / TH2).